The sequence spans 188 residues: Abscisic acid receptor PYL8 (188 aa).

The tract at residues 25–176 (HELVDNQCSS…NLKSLADISE (152 aa)) is START-like. An intrachain disulfide couples Cys-32 to Cys-157. Position 61 (Lys-61) interacts with abscisate. A Phosphothreonine; by CARK1 modification is found at Thr-77. The Gate loop signature appears at 85–89 (SGLPA). Abscisate-binding positions include 89-94 (ATRSTE), 116-122 (RLKNYSS), and Glu-141. The Latch loop signature appears at 115–117 (HRL).

The protein belongs to the PYR/PYL/RCAR abscisic acid intracellular receptor family. As to quaternary structure, monomer. Homodimer. Binds ABA on one subunit only. interacts with ABI1 and HAB1, and possibly with other PP2Cs. Binds to CARs protein in an ABA-independent manner, both at the plasma membrane and in the nucleus. Interacts directly with CAR1 and CAR4. Interacts with MYB44, MYB73 and MYB77 in an ABA-independent manner. Interacts with DDA1. Interacts with CARK1 in the cytosol. Binds to ABI1 when phosphorylated by CARK1. Interacts with AIP1 in the nucleus. In terms of processing, phosphorylated by CARK1 especially in response to abscisic acid (ABA); this phosphorylation promotes its stability and inhibitory ability to ABI1. Post-translationally, ubiquitinated in DDA1- and CDD complex-dependent manner. Ubiquitination leads to its subsequent proteasomal degradation.

Its subcellular location is the cytoplasm. It localises to the cytosol. It is found in the nucleus. The protein localises to the cell membrane. Its function is as follows. Receptor for abscisic acid (ABA) required for ABA-mediated responses such as stomatal closure and germination inhibition. Inhibits the activity of group-A protein phosphatases type 2C (PP2Cs) in an ABA-independent manner but more efficiently when activated by ABA. Confers enhanced sensitivity to ABA. Can be activated by both (-)-ABA and (+)-ABA. Mediates crosstalk between ABA and auxin signaling to regulate lateral root growth. Required for lateral root growth suppression by ABA. In response to auxin, promotes lateral root growth by enhancing MYB77-dependent transcription of the auxin-responsive gene IAA19. Enhances the abilities of MYB44 and MYB73 to activate IAA19 gene. In Arabidopsis thaliana (Mouse-ear cress), this protein is Abscisic acid receptor PYL8.